The following is a 68-amino-acid chain: Large ribosomal subunit protein bL33c (68 aa).

It belongs to the bacterial ribosomal protein bL33 family.

The protein localises to the plastid. It is found in the chloroplast. This Lactuca sativa (Garden lettuce) protein is Large ribosomal subunit protein bL33c.